We begin with the raw amino-acid sequence, 273 residues long: Dermonecrotic toxin LhSicTox-alphaIA1iv (273 aa).

His5 is a catalytic residue. Mg(2+)-binding residues include Glu25 and Asp27. His41 functions as the Nucleophile in the catalytic mechanism. Disulfide bonds link Cys45/Cys51 and Cys47/Cys190. Residue Asp85 participates in Mg(2+) binding.

It belongs to the arthropod phospholipase D family. Class II subfamily. Mg(2+) is required as a cofactor. As to expression, expressed by the venom gland.

It localises to the secreted. The enzyme catalyses an N-(acyl)-sphingosylphosphocholine = an N-(acyl)-sphingosyl-1,3-cyclic phosphate + choline. It carries out the reaction an N-(acyl)-sphingosylphosphoethanolamine = an N-(acyl)-sphingosyl-1,3-cyclic phosphate + ethanolamine. It catalyses the reaction a 1-acyl-sn-glycero-3-phosphocholine = a 1-acyl-sn-glycero-2,3-cyclic phosphate + choline. The catalysed reaction is a 1-acyl-sn-glycero-3-phosphoethanolamine = a 1-acyl-sn-glycero-2,3-cyclic phosphate + ethanolamine. Dermonecrotic toxins cleave the phosphodiester linkage between the phosphate and headgroup of certain phospholipids (sphingolipid and lysolipid substrates), forming an alcohol (often choline) and a cyclic phosphate. This toxin acts on sphingomyelin (SM). It may also act on ceramide phosphoethanolamine (CPE), lysophosphatidylcholine (LPC) and lysophosphatidylethanolamine (LPE), but not on lysophosphatidylserine (LPS), and lysophosphatidylglycerol (LPG). It acts by transphosphatidylation, releasing exclusively cyclic phosphate products as second products. Induces dermonecrosis, hemolysis, increased vascular permeability, edema, inflammatory response, and platelet aggregation. This Loxosceles hirsuta (Recluse spider) protein is Dermonecrotic toxin LhSicTox-alphaIA1iv.